A 513-amino-acid chain; its full sequence is Putative BTB/POZ domain-containing protein L55 (513 aa).

One can recognise a BTB domain in the interval 11–83; that stretch reads SPIKIILQDI…FHGYKMEISD (73 aa).

The protein belongs to the mimivirus BTB/WD family.

This chain is Putative BTB/POZ domain-containing protein L55, found in Acanthamoeba polyphaga (Amoeba).